The following is a 257-amino-acid chain: Trans-aconitate 2-methyltransferase (257 aa).

It belongs to the methyltransferase superfamily. Tam family.

It is found in the cytoplasm. The catalysed reaction is trans-aconitate + S-adenosyl-L-methionine = (E)-3-(methoxycarbonyl)pent-2-enedioate + S-adenosyl-L-homocysteine. In terms of biological role, catalyzes the S-adenosylmethionine monomethyl esterification of trans-aconitate. The protein is Trans-aconitate 2-methyltransferase of Sinorhizobium fredii (strain NBRC 101917 / NGR234).